Consider the following 361-residue polypeptide: MALTLEALAARFGGEIVGDGRCEVGALAPLDQAGPRQLAFLANPKYLAQVETTGAGAVLIAPGDLEKLGAAAHGRNFIVTPNPYAYFARVAQMFIDLAAPPRAAGVHPSATIDPAAQVAASAVIGPHVTVEAGAVIGERAQLDANVFVGRGTRIGDDSHLYPNVAIYHGCTLGPRAIVHSGAVIGSDGFGFAPDFVGEGDARTGAWVKIPQVGGVKVGPDVEIGANTTIDRGAMADTVIDECVKIDNLVQIGHNCRIGAYTVIAGCAGIAGSTTIGKHCMIGGAVGIAGHVTLGDYVIVTAKSGVSKSLPKAGIYTSAFPAVEHGDWNRSAALVRNLDKLRDRIKALETALVAREGDAGGA.

The Proton acceptor role is filled by H253.

The protein belongs to the transferase hexapeptide repeat family. LpxD subfamily. As to quaternary structure, homotrimer.

It catalyses the reaction a UDP-3-O-[(3R)-3-hydroxyacyl]-alpha-D-glucosamine + a (3R)-hydroxyacyl-[ACP] = a UDP-2-N,3-O-bis[(3R)-3-hydroxyacyl]-alpha-D-glucosamine + holo-[ACP] + H(+). It functions in the pathway bacterial outer membrane biogenesis; LPS lipid A biosynthesis. Catalyzes the N-acylation of UDP-3-O-acylglucosamine using 3-hydroxyacyl-ACP as the acyl donor. Is involved in the biosynthesis of lipid A, a phosphorylated glycolipid that anchors the lipopolysaccharide to the outer membrane of the cell. This Burkholderia mallei (strain ATCC 23344) protein is UDP-3-O-acylglucosamine N-acyltransferase.